The following is a 300-amino-acid chain: GTPase Era (300 aa).

The region spanning 4–172 (KSGFVALAGK…LEKIKEELPE (169 aa)) is the Era-type G domain. Residues 12–19 (GKPNVGKS) form a G1 region. 12-19 (GKPNVGKS) contributes to the GTP binding site. A G2 region spans residues 38–42 (QTTRN). Residues 59–62 (DTPG) form a G3 region. GTP is bound by residues 59–63 (DTPGI) and 121–124 (NKID). Residues 121–124 (NKID) are G4. The G5 stretch occupies residues 151–153 (ISA). In terms of domain architecture, KH type-2 spans 195 to 280 (IREKIFHLTR…YLDLNVKVKE (86 aa)).

The protein belongs to the TRAFAC class TrmE-Era-EngA-EngB-Septin-like GTPase superfamily. Era GTPase family. Monomer.

The protein resides in the cytoplasm. It is found in the cell inner membrane. Functionally, an essential GTPase that binds both GDP and GTP, with rapid nucleotide exchange. Plays a role in 16S rRNA processing and 30S ribosomal subunit biogenesis and possibly also in cell cycle regulation and energy metabolism. This chain is GTPase Era, found in Thermotoga petrophila (strain ATCC BAA-488 / DSM 13995 / JCM 10881 / RKU-1).